Reading from the N-terminus, the 223-residue chain is Deoxyribose-phosphate aldolase (223 aa).

D91 functions as the Proton donor/acceptor in the catalytic mechanism. Catalysis depends on K154, which acts as the Schiff-base intermediate with acetaldehyde. The Proton donor/acceptor role is filled by K183.

Belongs to the DeoC/FbaB aldolase family. DeoC type 1 subfamily.

It localises to the cytoplasm. It catalyses the reaction 2-deoxy-D-ribose 5-phosphate = D-glyceraldehyde 3-phosphate + acetaldehyde. It functions in the pathway carbohydrate degradation; 2-deoxy-D-ribose 1-phosphate degradation; D-glyceraldehyde 3-phosphate and acetaldehyde from 2-deoxy-alpha-D-ribose 1-phosphate: step 2/2. Its function is as follows. Catalyzes a reversible aldol reaction between acetaldehyde and D-glyceraldehyde 3-phosphate to generate 2-deoxy-D-ribose 5-phosphate. This Geobacillus kaustophilus (strain HTA426) protein is Deoxyribose-phosphate aldolase.